The following is a 259-amino-acid chain: Aspartate/glutamate leucyltransferase (259 aa).

It belongs to the R-transferase family. Bpt subfamily.

The protein localises to the cytoplasm. It carries out the reaction N-terminal L-glutamyl-[protein] + L-leucyl-tRNA(Leu) = N-terminal L-leucyl-L-glutamyl-[protein] + tRNA(Leu) + H(+). The catalysed reaction is N-terminal L-aspartyl-[protein] + L-leucyl-tRNA(Leu) = N-terminal L-leucyl-L-aspartyl-[protein] + tRNA(Leu) + H(+). Its function is as follows. Functions in the N-end rule pathway of protein degradation where it conjugates Leu from its aminoacyl-tRNA to the N-termini of proteins containing an N-terminal aspartate or glutamate. This is Aspartate/glutamate leucyltransferase from Sinorhizobium medicae (strain WSM419) (Ensifer medicae).